The sequence spans 1483 residues: Tyrosine-protein kinase BAZ1B (1483 aa).

The WAC domain occupies 20–126 (EPLFTIPHTQ…GEECDFEVGK (107 aa)). Residues 145–212 (EEATEKKSDG…TSLKKGERKW (68 aa)) form a disordered region. Composition is skewed to basic and acidic residues over residues 148–165 (TEKK…DKEN) and 172–195 (DHQK…DRAR). 3 positions are modified to phosphoserine: Ser152, Ser158, and Ser161. The short motif at 207–213 (KGERKWA) is the C motif element. Thr266 is subject to Phosphothreonine. Residues 302-333 (NPSTKRKNTGSPDRKPSKKSKTDNSSLSSPLN) are disordered. Residues Ser330, Ser345, Ser347, Ser349, Ser361, and Ser374 each carry the phosphoserine modification. Disordered stretches follow at residues 379–432 (HTNF…KTPK) and 446–470 (GTQK…PHKH). Basic residues-rich tracts occupy residues 384–395 (IPKKGPPAKKPG) and 423–432 (SPKKGLKTPK). The stretch at 533-586 (KRWASMSEEQRKEYLKKKREELKKKLKEKAKERREKEMLERLEKQKRYEDQELT) forms a coiled coil. Residues 604-668 (NTLFGDVAMV…LQTLLQDEIA (65 aa)) enclose the DDT domain. Ser699, Ser705, Ser708, and Ser716 each carry phosphoserine. Residues 768-814 (TRQQMSAELWKERLAVLKEENDKKRAEKQKRKEMEAKNKENGKVENG) adopt a coiled-coil conformation. The segment covering 788–810 (NDKKRAEKQKRKEMEAKNKENGK) has biased composition (basic and acidic residues). Residues 788–817 (NDKKRAEKQKRKEMEAKNKENGKVENGLGK) form a disordered region. Lys826 is covalently cross-linked (Glycyl lysine isopeptide (Lys-Gly) (interchain with G-Cter in SUMO1); alternate). A Glycyl lysine isopeptide (Lys-Gly) (interchain with G-Cter in SUMO2); alternate cross-link involves residue Lys826. The stretch at 850–893 (IQAKKEREIQEREMKVKLERQAEEERIRKHKAAAEKAFQEGIAK) forms a coiled coil. Lys853 participates in a covalent cross-link: Glycyl lysine isopeptide (Lys-Gly) (interchain with G-Cter in SUMO2). Residue Ser947 is modified to Phosphoserine. Glycyl lysine isopeptide (Lys-Gly) (interchain with G-Cter in SUMO2) cross-links involve residues Lys1043, Lys1089, and Lys1107. The segment at 1184-1234 (NARCKVCRKKGEDDKLILCDECNKAFHLFCLRPALYEVPDGEWQCPACQPA) adopts a PHD-type zinc-finger fold. Residues 1237-1326 (RRNSRGRNYT…PKAPPVDDAE (90 aa)) are disordered. A coiled-coil region spans residues 1245–1283 (YTEESASEDSEDDESDEEEEEEEEEEEEEDYEVAGLRLR). The span at 1249-1276 (SASEDSEDDESDEEEEEEEEEEEEEDYE) shows a compositional bias: acidic residues. Composition is skewed to basic residues over residues 1282-1292 (LRPRKTIRGKH) and 1301-1316 (SGRR…RRSQ). Ser1315 carries the phosphoserine modification. Lys1335 bears the N6-acetyllysine mark. One can recognise a Bromo domain in the interval 1339-1443 (RRQSLELQKC…QCLVALLHKH (105 aa)). Ser1342 and Ser1468 each carry phosphoserine. A disordered region spans residues 1455 to 1483 (KKFPDRLAEDEGDSEPEAVGQSRGRRQKK).

Belongs to the WAL family. BAZ1B subfamily. In terms of assembly, component of the WICH-1 ISWI chromatin remodeling complex, at least composed of SMARCA1 and BAZ1B/WSTF, which regulates the spacing of histone octamers on the DNA template to facilitate access to DNA. Within the WICH-1 ISWI chromatin remodeling complex interacts with SMARCA1; the interaction is direct. Component of the WICH-5 ISWI chromatin remodeling complex (also called the WICH complex), at least composed of SMARCA5/SNF2H and BAZ1B/WSTF, which regulates the spacing of histone octamers on the DNA template to facilitate access to DNA. Within the WICH-5 ISWI chromatin remodeling complex interacts with SMARCA5/SNF2H; the interaction is direct. Component of the B-WICH chromatin remodeling complex, at least composed of SMARCA5/SNF2H, BAZ1B/WSTF, SF3B1, DEK, MYO1C, ERCC6, MYBBP1A and DDX21. Within the B-WICH chromatin remodeling complex, interacts with SMARCA5/SNF2H, DDX21, DEK, MYBBP1A, SF3B1, ERCC6 and MYO1C. Interacts with PCNA; the interaction is direct and is required for BAZ1B/WSTF binding to replication foci during S phase. Interacts with CDT1. Mn(2+) is required as a cofactor. In terms of tissue distribution, ubiquitously expressed with high levels of expression in heart, brain, placenta, skeletal muscle and ovary.

It is found in the nucleus. The catalysed reaction is L-tyrosyl-[protein] + ATP = O-phospho-L-tyrosyl-[protein] + ADP + H(+). Atypical tyrosine-protein kinase that plays a central role in chromatin remodeling and acts as a transcription regulator. Involved in DNA damage response by phosphorylating 'Tyr-142' of histone H2AX (H2AXY142ph). H2AXY142ph plays a central role in DNA repair and acts as a mark that distinguishes between apoptotic and repair responses to genotoxic stress. Regulatory subunit of the ATP-dependent WICH-1 and WICH-5 ISWI chromatin remodeling complexes, which form ordered nucleosome arrays on chromatin and facilitate access to DNA during DNA-templated processes such as DNA replication, transcription, and repair. Both complexes regulate the spacing of nucleosomes along the chromatin and have the ability to slide mononucleosomes to the center of a DNA template. The WICH-1 ISWI chromatin remodeling complex has a lower ATP hydrolysis rate than the WICH-5 ISWI chromatin remodeling complex. The WICH-5 ISWI chromatin-remodeling complex regulates the transcription of various genes, has a role in RNA polymerase I transcription. Within the B-WICH complex has a role in RNA polymerase III transcription. Mediates the recruitment of the WICH-5 ISWI chromatin remodeling complex to replication foci during DNA replication. This is Tyrosine-protein kinase BAZ1B (BAZ1B) from Homo sapiens (Human).